A 653-amino-acid chain; its full sequence is Macrolide export ATP-binding/permease protein MacB (653 aa).

Positions 6–244 (IELQGVSRSY…PPLLPCSAHP (239 aa)) constitute an ABC transporter domain. Residue 42–49 (GSSGSGKS) coordinates ATP. Helical transmembrane passes span 275–295 (LLTM…VGLG), 525–545 (FSVL…LGVM), 576–596 (FLIE…LLAL), and 616–636 (WPAV…FGYW).

It belongs to the ABC transporter superfamily. Macrolide exporter (TC 3.A.1.122) family. In terms of assembly, homodimer. Part of the tripartite efflux system MacAB-TolC, which is composed of an inner membrane transporter, MacB, a periplasmic membrane fusion protein, MacA, and an outer membrane component, TolC. The complex forms a large protein conduit and can translocate molecules across both the inner and outer membranes. Interacts with MacA.

It is found in the cell inner membrane. In terms of biological role, part of the tripartite efflux system MacAB-TolC. MacB is a non-canonical ABC transporter that contains transmembrane domains (TMD), which form a pore in the inner membrane, and an ATP-binding domain (NBD), which is responsible for energy generation. Confers resistance against macrolides. This Sodalis glossinidius (strain morsitans) protein is Macrolide export ATP-binding/permease protein MacB.